A 284-amino-acid polypeptide reads, in one-letter code: Tropomyosin Per a 7.0101 (284 aa).

A coiled-coil region spans residues 22–266 (ALLCEQQARD…EDELVHEKEK (245 aa)).

Belongs to the tropomyosin family. Homodimer.

In terms of biological role, tropomyosin, in association with the troponin complex, plays a central role in the calcium dependent regulation of muscle contraction. In Periplaneta americana (American cockroach), this protein is Tropomyosin Per a 7.0101.